The primary structure comprises 379 residues: F-box/kelch-repeat protein At4g33900 (379 aa).

An F-box domain is found at 9–55 (IKRFLMLPDDLVFNCLARVSRLHYPTLSLVSKKFRFLLASKELYQTR). 3 Kelch repeats span residues 116-175 (EIYA…TLDG), 176-222 (RIYV…LSIS), and 262-308 (SCCV…RNFK).

The chain is F-box/kelch-repeat protein At4g33900 from Arabidopsis thaliana (Mouse-ear cress).